Reading from the N-terminus, the 354-residue chain is Transcription factor ATOH1 (354 aa).

Over residues 1–21 (MSRLLHAEEWAEVKELGDHHR) the composition is skewed to basic and acidic residues. 2 disordered regions span residues 1–55 (MSRL…ELSL) and 91–122 (EAAAPRDEVDGRGELVRRSSGGASSSKSPGPV). The span at 26-38 (HHLPQPPPPPQPP) shows a compositional bias: pro residues. Residues 94–107 (APRDEVDGRGELVR) show a composition bias toward basic and acidic residues. Positions 108 to 122 (RSSGGASSSKSPGPV) are enriched in low complexity. The 53-residue stretch at 159 to 211 (QRRLAANARERRRMHGLNHAFDQLRNVIPSFNNDKKLSKYETLQMAQIYINAL) folds into the bHLH domain. Disordered stretches follow at residues 216-277 (QTPS…TRFS) and 312-354 (SPSL…DEAS). A compositionally biased stretch (low complexity) spans 250 to 264 (NATAAGAQQASGGSQ). The span at 335–354 (HRSDGEFSPHSHYSDSDEAS) shows a compositional bias: basic and acidic residues.

As to quaternary structure, efficient DNA binding requires dimerization with another bHLH protein.

The protein localises to the nucleus. In terms of biological role, transcriptional regulator. Activates E box-dependent transcription in collaboration with TCF3/E47, but the activity is completely antagonized by the negative regulator of neurogenesis HES1. Plays a role in the differentiation of subsets of neural cells by activating E box-dependent transcription. This is Transcription factor ATOH1 from Homo sapiens (Human).